The sequence spans 239 residues: uncharacterized protein (239 aa).

This is an uncharacterized protein from Homo sapiens (Human).